A 170-amino-acid polypeptide reads, in one-letter code: Photosystem I assembly protein Ycf3 (170 aa).

TPR repeat units follow at residues 35-68, 72-105, and 120-153; these read AFTY…EIDP, SYIL…NPFL, and GEQA…TPGN.

The protein belongs to the Ycf3 family.

Its subcellular location is the plastid. The protein resides in the chloroplast thylakoid membrane. Its function is as follows. Essential for the assembly of the photosystem I (PSI) complex. May act as a chaperone-like factor to guide the assembly of the PSI subunits. The protein is Photosystem I assembly protein Ycf3 of Saccharum officinarum (Sugarcane).